Here is a 294-residue protein sequence, read N- to C-terminus: Ankyrin repeat and SOCS box protein 9 (294 aa).

Methionine 1 bears the N-acetylmethionine mark. ANK repeat units lie at residues 35–64 (SDWS…AVNI), 68–97 (DHVS…QVNG), 101–130 (DWHT…SVQP), 133–162 (DLAS…NIDH), 166–195 (HLGT…DVNQ), and 198–227 (GQDS…DTQA). The residue at position 51 (serine 51) is a Phosphoserine. Residues 240-294 (PPESPLAQLFLEREGPPSLMQLCRLRIRKCFGIQQHHKITKLVLPEDLKQFLLHL) form the SOCS box domain.

Belongs to the ankyrin SOCS box (ASB) family. In terms of assembly, substrate-recognition component of the ECS(ASB9) complex, composed of ASB9, CUL5, ELOB, ELOC and RNF7/RBX2. In terms of tissue distribution, predominantly expressed in testis, kidney, and liver.

It is found in the mitochondrion. It participates in protein modification; protein ubiquitination. Its function is as follows. Substrate-recognition component of a cullin-5-RING E3 ubiquitin-protein ligase complex (ECS complex, also named CRL5 complex), which mediates the ubiquitination and subsequent proteasomal degradation of target proteins. The ECS(ASB9) complex catalyzes ubiquitination of creatine kinases CKB and CKMT1A. In terms of biological role, does not interact with the Elongin BC complex, likely to be a negative regulator of isoform 1. The chain is Ankyrin repeat and SOCS box protein 9 from Homo sapiens (Human).